A 518-amino-acid chain; its full sequence is Glutamate--cysteine ligase (518 aa).

This sequence belongs to the glutamate--cysteine ligase type 1 family. Type 1 subfamily.

It catalyses the reaction L-cysteine + L-glutamate + ATP = gamma-L-glutamyl-L-cysteine + ADP + phosphate + H(+). Its pathway is sulfur metabolism; glutathione biosynthesis; glutathione from L-cysteine and L-glutamate: step 1/2. This Cronobacter sakazakii (strain ATCC BAA-894) (Enterobacter sakazakii) protein is Glutamate--cysteine ligase.